We begin with the raw amino-acid sequence, 91 residues long: Cytochrome c-554(547) (91 aa).

Residues C15, C18, H19, and M64 each contribute to the heme c site.

In terms of assembly, monomer. In terms of processing, binds 1 heme c group covalently per subunit.

The protein is Cytochrome c-554(547) of Halothiobacillus neapolitanus (Thiobacillus neapolitanus).